The chain runs to 440 residues: Ribosomal protein uS12 methylthiotransferase RimO (440 aa).

The MTTase N-terminal domain maps to 6–116; that stretch reads PKVGFVSLGC…VVTAVHEVVP (111 aa). [4Fe-4S] cluster is bound by residues cysteine 15, cysteine 51, cysteine 80, cysteine 149, cysteine 153, and cysteine 156. Residues 135–373 enclose the Radical SAM core domain; that stretch reads LTPRHYAYLK…MAHQQAISAA (239 aa). The 65-residue stretch at 376-440 folds into the TRAM domain; that stretch reads QLKVGKEIEV…DEYDLWAELV (65 aa).

The protein belongs to the methylthiotransferase family. RimO subfamily. It depends on [4Fe-4S] cluster as a cofactor.

It is found in the cytoplasm. The enzyme catalyses L-aspartate(89)-[ribosomal protein uS12]-hydrogen + (sulfur carrier)-SH + AH2 + 2 S-adenosyl-L-methionine = 3-methylsulfanyl-L-aspartate(89)-[ribosomal protein uS12]-hydrogen + (sulfur carrier)-H + 5'-deoxyadenosine + L-methionine + A + S-adenosyl-L-homocysteine + 2 H(+). Catalyzes the methylthiolation of an aspartic acid residue of ribosomal protein uS12. The chain is Ribosomal protein uS12 methylthiotransferase RimO from Pseudomonas aeruginosa (strain ATCC 15692 / DSM 22644 / CIP 104116 / JCM 14847 / LMG 12228 / 1C / PRS 101 / PAO1).